The following is a 157-amino-acid chain: Peptide methionine sulfoxide reductase MsrA (157 aa).

Cysteine 13 is a catalytic residue.

The protein belongs to the MsrA Met sulfoxide reductase family.

It catalyses the reaction L-methionyl-[protein] + [thioredoxin]-disulfide + H2O = L-methionyl-(S)-S-oxide-[protein] + [thioredoxin]-dithiol. It carries out the reaction [thioredoxin]-disulfide + L-methionine + H2O = L-methionine (S)-S-oxide + [thioredoxin]-dithiol. Has an important function as a repair enzyme for proteins that have been inactivated by oxidation. Catalyzes the reversible oxidation-reduction of methionine sulfoxide in proteins to methionine. This Methanococcus maripaludis (strain C5 / ATCC BAA-1333) protein is Peptide methionine sulfoxide reductase MsrA.